The primary structure comprises 233 residues: Attacin-B (233 aa).

Residues 1–17 (MFAKLFLVSVLLVGVNS) form the signal peptide. The propeptide occupies 18–46 (RYVLVEEPGYYDKQYEEQPQQWVNSRVRR).

The protein belongs to the attacin/sarcotoxin-2 family.

It localises to the secreted. Hemolymph antibacterial protein. This chain is Attacin-B, found in Hyalophora cecropia (Cecropia moth).